The sequence spans 553 residues: Arginine--tRNA ligase (553 aa).

The short motif at 130 to 140 (ANPTGPIHLGG) is the 'HIGH' region element.

This sequence belongs to the class-I aminoacyl-tRNA synthetase family. As to quaternary structure, monomer.

It is found in the cytoplasm. The catalysed reaction is tRNA(Arg) + L-arginine + ATP = L-arginyl-tRNA(Arg) + AMP + diphosphate. This Corynebacterium aurimucosum (strain ATCC 700975 / DSM 44827 / CIP 107346 / CN-1) (Corynebacterium nigricans) protein is Arginine--tRNA ligase.